A 323-amino-acid polypeptide reads, in one-letter code: MKTTFLDFEQPIAELEAKIEELRFVQDDSAVDISEEIERLSKKSQQLTKDLYANLTPWQVSQIARHPQRPYTFDYVNELFTDFHELHGDRNYADDLSIVGGLARFNGQACMVIGHQKGRDTKERALRNFGMPRPEGYRKAERLMRLAEKFGLPIFTFIDTPGAYPGIGAEERGQSEAIGRNLYVMAELKTPLIATIIGEGGSGGALAIAVGDSVLMLQFSTYSVISPEGCASILWKSAAKAPEAAEALGLTAHRLKALGLIDKIVNEPLGGAHRDPKGMAAMLRRALADSLRQFQGMSINDLRQRRFERLMSYGKFKETTPGA.

Residues 39–293 (RLSKKSQQLT…RRALADSLRQ (255 aa)) enclose the CoA carboxyltransferase C-terminal domain.

Belongs to the AccA family. In terms of assembly, acetyl-CoA carboxylase is a heterohexamer composed of biotin carboxyl carrier protein (AccB), biotin carboxylase (AccC) and two subunits each of ACCase subunit alpha (AccA) and ACCase subunit beta (AccD).

It is found in the cytoplasm. It carries out the reaction N(6)-carboxybiotinyl-L-lysyl-[protein] + acetyl-CoA = N(6)-biotinyl-L-lysyl-[protein] + malonyl-CoA. The protein operates within lipid metabolism; malonyl-CoA biosynthesis; malonyl-CoA from acetyl-CoA: step 1/1. Its function is as follows. Component of the acetyl coenzyme A carboxylase (ACC) complex. First, biotin carboxylase catalyzes the carboxylation of biotin on its carrier protein (BCCP) and then the CO(2) group is transferred by the carboxyltransferase to acetyl-CoA to form malonyl-CoA. The sequence is that of Acetyl-coenzyme A carboxylase carboxyl transferase subunit alpha from Paraburkholderia phytofirmans (strain DSM 17436 / LMG 22146 / PsJN) (Burkholderia phytofirmans).